Here is a 542-residue protein sequence, read N- to C-terminus: Hydroxylamine reductase (542 aa).

[4Fe-4S] cluster is bound by residues cysteine 3, cysteine 6, cysteine 15, and cysteine 21. The hybrid [4Fe-2O-2S] cluster site is built by histidine 238, glutamate 262, cysteine 307, cysteine 398, cysteine 426, cysteine 451, glutamate 485, and lysine 487. Cysteine 398 carries the post-translational modification Cysteine persulfide.

This sequence belongs to the HCP family. [4Fe-4S] cluster is required as a cofactor. It depends on hybrid [4Fe-2O-2S] cluster as a cofactor.

It localises to the cytoplasm. It catalyses the reaction A + NH4(+) + H2O = hydroxylamine + AH2 + H(+). In terms of biological role, catalyzes the reduction of hydroxylamine to form NH(3) and H(2)O. In Microcystis aeruginosa (strain NIES-843 / IAM M-2473), this protein is Hydroxylamine reductase.